Here is a 957-residue protein sequence, read N- to C-terminus: SLIT and NTRK-like protein 5 (957 aa).

Residues 1-40 (MHVCCPPVTLEQDLHRKMHSWMLQTLAFAVTSLVLSCAET) form the signal peptide. At 41 to 664 (IDYYGEICDN…GTGASSVPLS (624 aa)) the chain is on the extracellular side. LRR repeat units lie at residues 82 to 103 (PIYH…EFVN), 106 to 127 (GASI…AFHG), 130 to 151 (GLRR…TFLG), 154 to 175 (NLEY…AFGK), 178 to 199 (MLQV…LFRF), and 201 to 222 (PLTH…GLLQ). An N-linked (GlcNAc...) asparagine glycan is attached at Asn-103. Residues 235–286 (NPWNCSCELISLKDWLDSISYSALVGDVVCETPFRLHGRDLDEVSKQELCPR) form the LRRCT 1 domain. Residues 317-358 (ATSSSAVYKPPLKPPKGTRQPNKPRVRPTSRQPSKDLGYSNY) are disordered. An LRRNT domain is found at 365-407 (QTKSPVPLECPTACTCNLQISDLGLNVNCQERKIESIAELQPK). LRR repeat units lie at residues 410 to 431 (NPKK…DFLE), 434 to 455 (GLDL…AFGD), 458 to 479 (NLRR…LFYG), 482 to 503 (SLQY…TFDP), 506 to 527 (NLQL…VFSG), and 529 to 550 (TLLR…GVLD). The 52-residue stretch at 563–614 (NPWDCTCDVVGMKLWIEQLKVGVLVDEVICKAPKKFAETYMRSIKSELLCPD) folds into the LRRCT 2 domain. Low complexity predominate over residues 623 to 632 (PTPSSIQVPS). The segment at 623–642 (PTPSSIQVPSRTNAATPAVR) is disordered. Asn-644 is a glycosylation site (N-linked (GlcNAc...) asparagine). Residues 665-685 (VLILSLLLVFIMSVFVAAGLF) traverse the membrane as a helical segment. Residues 686–957 (VLVMKRRKKN…LEKQTTFSQF (272 aa)) are Cytoplasmic-facing. The interval 789–844 (SNHHLQQQPPPPPQQPQQQPPPQMQMQPGEEERRESHHLRSPAYSVSTIEPREDLL) is disordered. Positions 796–811 (QPPPPPQQPQQQPPPQ) are enriched in pro residues.

Belongs to the SLITRK family. In terms of tissue distribution, in the adult, significant expression is detected only in the brain. In the embryo, expressed in the subventricular zone, cortical plate, pyramidal layer of hippocampus, thalamus and hypothalamus.

It is found in the membrane. Its function is as follows. Suppresses neurite outgrowth. The sequence is that of SLIT and NTRK-like protein 5 (Slitrk5) from Mus musculus (Mouse).